The sequence spans 903 residues: MTDVTVKALAAEIQTSVDRLVQQFADAGIPKSAEDSVTAQEKQALLAHLNREHGSGPDKLTLQRKTRSTLNIQGTGGKSKSVQIEVRKKRTFVKRDPQEAERLAAEEQAKREAEEQARREAEEAAKREAEEKAKREAGDKAKREAEEQAKRDAADKAKREAAETSKVSNQQTDEVSKAAQAEKARREAEALELKRKAEEEARRKLEENARRVAEEARRMAEENATKWESGSEEESEDTSDYHVTTSQHARQAEDDSDREVEGGRGRARPAKVARQKKSNKHSESKADREEARAAVRGGKGGKRKGSSLQQGFNKPAQAVNRDVVIGETITVAELANKMAVKGSQVIKAMMKLGAMATINQVIDQETAQLVAEEMGHKVILRRENELEEAVMSDRDMGAQAEPRAPVVTIMGHVDHGKTSLLDYIRSTKVASGEAGGITQHIGAYHVQTDNGMITFLDTPGHAAFTAMRARGAQATDIVVLVVAADDGVMPQTIEAIQHAKAAKVPVVVAVNKIDKPDADPDRVKNELSQHGIIPEEWGGDCQFVHVSAKAGTGIDELLDAILLQSEVLELKAVRKGMASGVVIESFLDKGRGPVATVLVREGTLNKGDIVLCGFEYGRVRAMRNELNQEVQEAGPSIPVEILGLSGVPAAGDEVTVVRDEKKAREVALYRQGKFREVKLARQQKSKLENMFANMTEGEVHEVNIVLKADVQGSVEAISDSLLKLSTDEVKVKIVGSGVGGITETDATLAAASNAILVGFNVRADASARRVIEAESLDLRYYSVIYNLIDEVKAAMSGMLSPELKQQIIGLAEVRDVFKSPKFGAIAGCMVTEGTIKRHNPIRVLRDNVVIYEGELESLRRFKDDVNEVRNGMECGIGVKNYNDVRVGDMIEVFEIIEIQRSID.

Residues 49–314 (LNREHGSGPD…GSSLQQGFNK (266 aa)) form a disordered region. Residues 68–82 (STLNIQGTGGKSKSV) are compositionally biased toward polar residues. 2 stretches are compositionally biased toward basic and acidic residues: residues 93-163 (VKRD…EAAE) and 174-225 (EVSK…ENAT). The span at 265–279 (GRARPAKVARQKKSN) shows a compositional bias: basic residues. The span at 280–293 (KHSESKADREEARA) shows a compositional bias: basic and acidic residues. In terms of domain architecture, tr-type G spans 402–571 (PRAPVVTIMG…LLQSEVLELK (170 aa)). Residues 411–418 (GHVDHGKT) are G1. Residue 411 to 418 (GHVDHGKT) coordinates GTP. The tract at residues 436–440 (GITQH) is G2. The segment at 457 to 460 (DTPG) is G3. GTP is bound by residues 457 to 461 (DTPGH) and 511 to 514 (NKID). Positions 511–514 (NKID) are G4. A G5 region spans residues 547-549 (SAK).

Belongs to the TRAFAC class translation factor GTPase superfamily. Classic translation factor GTPase family. IF-2 subfamily.

It localises to the cytoplasm. Its function is as follows. One of the essential components for the initiation of protein synthesis. Protects formylmethionyl-tRNA from spontaneous hydrolysis and promotes its binding to the 30S ribosomal subunits. Also involved in the hydrolysis of GTP during the formation of the 70S ribosomal complex. This is Translation initiation factor IF-2 from Cronobacter sakazakii (strain ATCC BAA-894) (Enterobacter sakazakii).